A 518-amino-acid polypeptide reads, in one-letter code: MKYKDLRDFIQRLEALGELRRVTQPVSPVLEMTELCDRVLRAGGPALLFNAPPGNAFPVLGNLFGTPRRVALGMGVDAGDDAALGSLRDLGRLLSALKEPDPPKSLKDAGKLLSLAKAVWDMAPKSVSSPPCQEIVWEGADVDLNKLPIQTCWPGDAGPLVTWGLTVTRGPNKSRQNLGIYRQQLIGRNKLIMRWLAHRGGALDFREFALQNPGKPYPVAVVLGADPATTLGAVTPVPDSLSEYQFAGLLRGSRTELAKCLTPGVDTLQVPARAEIVLEGFIHPQEGAPAPAPAGAPPRPAGNAAAAYEHALEGPYGDHTGYYNEQEWFPVFTVERITMRRDAIYHSTYTGKPPDEPAVLGVALNEVFVPLLQKQFTEITDFYLPPEGCSYRMAIVQMKKSYAGHAKRVMFGVWSFLRQFMYTKFIVVVDEDVNIRDWKEVIWAITTRVDPVRDTVMVDSTPIDYLDFASPVAGLGSKMGLDATNKWPGETSREWGRPIEMDAAVKARVDRLWQEIGL.

N177 provides a ligand contact to Mn(2+). Prenylated FMN contacts are provided by residues 180–182 (IYR), 194–196 (RWL), and 199–200 (RG). E243 contributes to the Mn(2+) binding site. The active-site Proton donor is D318.

Belongs to the UbiD family. As to quaternary structure, homohexamer. Prenylated FMN is required as a cofactor. It depends on Mn(2+) as a cofactor.

Its subcellular location is the cell membrane. It catalyses the reaction a 4-hydroxy-3-(all-trans-polyprenyl)benzoate + H(+) = a 2-(all-trans-polyprenyl)phenol + CO2. It functions in the pathway cofactor biosynthesis; ubiquinone biosynthesis. Catalyzes the decarboxylation of 3-octaprenyl-4-hydroxy benzoate to 2-octaprenylphenol, an intermediate step in ubiquinone biosynthesis. This Burkholderia orbicola (strain AU 1054) protein is 3-octaprenyl-4-hydroxybenzoate carboxy-lyase.